We begin with the raw amino-acid sequence, 722 residues long: Polyribonucleotide nucleotidyltransferase (722 aa).

Mg(2+)-binding residues include aspartate 487 and aspartate 493. The KH domain maps to 554–613; that stretch reads PRMVSFKIHPDKIREVIGKGGATIQALTKETGCSIDIKDDGTVTIASTSAEGMAEAKARI. In terms of domain architecture, S1 motif spans 623–691; the sequence is GKIYEGPVVK…ERGRLRLSLK (69 aa).

Belongs to the polyribonucleotide nucleotidyltransferase family. It depends on Mg(2+) as a cofactor.

It localises to the cytoplasm. It catalyses the reaction RNA(n+1) + phosphate = RNA(n) + a ribonucleoside 5'-diphosphate. Involved in mRNA degradation. Catalyzes the phosphorolysis of single-stranded polyribonucleotides processively in the 3'- to 5'-direction. The chain is Polyribonucleotide nucleotidyltransferase from Polynucleobacter necessarius subsp. necessarius (strain STIR1).